Reading from the N-terminus, the 124-residue chain is NADH-quinone oxidoreductase subunit K (124 aa).

A run of 3 helical transmembrane segments spans residues Met28–Val48, Phe52–Val72, and Ile84–Leu104.

This sequence belongs to the complex I subunit 4L family. NDH-1 is composed of 14 different subunits. Subunits NuoA, H, J, K, L, M, N constitute the membrane sector of the complex.

The protein resides in the cell inner membrane. The catalysed reaction is a quinone + NADH + 5 H(+)(in) = a quinol + NAD(+) + 4 H(+)(out). In terms of biological role, NDH-1 shuttles electrons from NADH, via FMN and iron-sulfur (Fe-S) centers, to quinones in the respiratory chain. The immediate electron acceptor for the enzyme in this species is believed to be ubiquinone. Couples the redox reaction to proton translocation (for every two electrons transferred, four hydrogen ions are translocated across the cytoplasmic membrane), and thus conserves the redox energy in a proton gradient. In Psychrobacter sp. (strain PRwf-1), this protein is NADH-quinone oxidoreductase subunit K.